Consider the following 290-residue polypeptide: Purine nucleoside phosphorylase (290 aa).

68 to 69 (RN) contributes to the phosphate binding site. Met204 lines the substrate pocket. Thr205 lines the phosphate pocket.

It belongs to the PNP/MTAP phosphorylase family. MTAP subfamily. In terms of assembly, homotrimer.

Its subcellular location is the cytoplasm. The protein localises to the nucleus. The catalysed reaction is a purine D-ribonucleoside + phosphate = a purine nucleobase + alpha-D-ribose 1-phosphate. Its pathway is purine metabolism; purine nucleoside salvage. Its function is as follows. Purine nucleoside phosphorylase involved in purine salvage. This is Purine nucleoside phosphorylase from Drosophila melanogaster (Fruit fly).